Here is a 1864-residue protein sequence, read N- to C-terminus: Nestin (1864 aa).

At Met1 the chain carries N-acetylmethionine. The head stretch occupies residues 1–7 (MEGCVGE). Residues 8–43 (ESFQMWELNRRLEAYLTRVKTLEEQNQLLSAELGGL) form a coil 1A region. The 307-residue stretch at 8-314 (ESFQMWELNR…TLLEAENSRL (307 aa)) folds into the IF rod domain. Positions 44 to 55 (RAQSGDASWRAR) are linker 1. A coil 1B region spans residues 56–151 (ADDELAALRV…ASHEEERAHL (96 aa)). Positions 152–174 (NAQAACTPRRPPAPAHASPIRAP) are linker 12. The segment at 175-193 (EVEELARRLGEVWRGAVRD) is coil 2A. A linker 2 region spans residues 194-196 (YQE). The interval 197–314 (RVAHMESSLG…TLLEAENSRL (118 aa)) is coil 2B. Ser312 carries the post-translational modification Phosphoserine. Positions 315 to 1864 (QTPGRSSQAS…DGDSWSSGED (1550 aa)) are tail. Thr316 carries the post-translational modification Phosphothreonine. Residues Ser356 and Ser359 each carry the phosphoserine modification. Thr389 is subject to Phosphothreonine. 3 disordered regions span residues 437–492 (GVLP…EEEG), 515–625 (EIQE…MSPE), and 680–845 (KEDQ…LDEN). A compositionally biased stretch (basic and acidic residues) spans 469 to 480 (SILEAKDRESSE). Residues 559–573 (KENCNSSIEENSGTV) are compositionally biased toward polar residues. Phosphoserine occurs at positions 565 and 575. Basic and acidic residues-rich tracts occupy residues 575-598 (SPEK…EKTL) and 609-618 (LGEEEPRMED). 7 positions are modified to phosphoserine: Ser623, Ser688, Ser731, Ser775, Ser841, Ser862, and Ser894. Composition is skewed to basic and acidic residues over residues 680–690 (KEDQRFPRSPE), 698–732 (PLEK…LKSP), 742–776 (LLEK…LKSP), and 786–843 (LLEK…RSLD). Basic and acidic residues-rich tracts occupy residues 916-925 (ILGSLEDRNG), 947-965 (QRIV…RSPE), and 978-1012 (LEGE…KSLE). The segment at 916 to 1113 (ILGSLEDRNG…VKSSETENIE (198 aa)) is disordered. Phosphoserine is present on residues Ser963, Ser1010, and Ser1021. Over residues 1065–1090 (EKVDPELPKPLRNDQEVVRSLDKENQ) the composition is skewed to basic and acidic residues. Phosphoserine occurs at positions 1106 and 1127. Disordered stretches follow at residues 1129 to 1158 (DTQE…LGCV), 1175 to 1344 (LRSL…DSVE), 1375 to 1722 (EAIH…DDGL), and 1735 to 1807 (ETVS…GLEQ). A compositionally biased stretch (polar residues) spans 1133–1143 (PLWSTEVTSET). Residues Ser1177, Ser1188, and Ser1195 each carry the phosphoserine modification. The segment covering 1204 to 1213 (GPEREQHQES) has biased composition (basic and acidic residues). The residue at position 1216 (Ser1216) is a Phosphoserine. Residues 1254–1273 (TEDKAELHLRGQGGEEKAVE) are compositionally biased toward basic and acidic residues. Ser1290 is modified (phosphoserine). Residues 1384–1405 (ESVKAKIDQGLEEPGKEPKEAG) show a composition bias toward basic and acidic residues. A compositionally biased stretch (acidic residues) spans 1429–1440 (ESGEGWGEEEAS). A compositionally biased stretch (basic and acidic residues) spans 1514–1527 (GRVEDEPEFGRGEI). Positions 1532-1547 (QDWEEGREDSEADELG) are enriched in acidic residues. Residues Ser1541 and Ser1565 each carry the phosphoserine modification. The span at 1612–1621 (LSSEEFEDLG) shows a compositional bias: acidic residues. Ser1656 and Ser1665 each carry phosphoserine. A compositionally biased stretch (acidic residues) spans 1658–1680 (GFADEEESGEEGEEEDADEEEGA). A compositionally biased stretch (basic and acidic residues) spans 1703-1712 (QRGDLEHESV). Composition is skewed to low complexity over residues 1713–1722 (GDSGLWDDGL) and 1741–1755 (SAEP…SASL). 2 positions are modified to phosphoserine: Ser1745 and Ser1747. The segment covering 1788 to 1797 (QGPNLESEQV) has biased composition (polar residues). Phosphoserine is present on residues Ser1837, Ser1860, and Ser1861. Positions 1841-1864 (LGPSQPLKFTLSGVDGDSWSSGED) are disordered.

Belongs to the intermediate filament family. In terms of assembly, forms homodimers and homotetramers in vitro. In mixtures with other intermediate filament proteins such as vimentin and alpha-internexin, this protein preferentially forms heterodimers which can assemble to form intermediate filaments if nestin does not exceed 25%. Interacts with FHOD3. Post-translationally, constitutively phosphorylated. This increases during mitosis when the cytoplasmic intermediate filament network is reorganized.

In terms of biological role, required for brain and eye development. Promotes the disassembly of phosphorylated vimentin intermediate filaments (IF) during mitosis and may play a role in the trafficking and distribution of IF proteins and other cellular factors to daughter cells during progenitor cell division. Required for survival, renewal and mitogen-stimulated proliferation of neural progenitor cells. The polypeptide is Nestin (Nes) (Mus musculus (Mouse)).